The primary structure comprises 332 residues: Glycerol-3-phosphate dehydrogenase [NAD(P)+] (332 aa).

Serine 15, tryptophan 16, and lysine 110 together coordinate NADPH. Residues lysine 110, glycine 137, and serine 139 each contribute to the sn-glycerol 3-phosphate site. Alanine 141 serves as a coordination point for NADPH. Sn-glycerol 3-phosphate contacts are provided by lysine 192, aspartate 245, serine 255, arginine 256, and asparagine 257. Lysine 192 (proton acceptor) is an active-site residue. Arginine 256 is an NADPH binding site. Position 282 (glutamate 282) interacts with NADPH.

This sequence belongs to the NAD-dependent glycerol-3-phosphate dehydrogenase family.

The protein resides in the cytoplasm. The catalysed reaction is sn-glycerol 3-phosphate + NAD(+) = dihydroxyacetone phosphate + NADH + H(+). It catalyses the reaction sn-glycerol 3-phosphate + NADP(+) = dihydroxyacetone phosphate + NADPH + H(+). Its pathway is membrane lipid metabolism; glycerophospholipid metabolism. Its function is as follows. Catalyzes the reduction of the glycolytic intermediate dihydroxyacetone phosphate (DHAP) to sn-glycerol 3-phosphate (G3P), the key precursor for phospholipid synthesis. This Coxiella burnetii (strain CbuG_Q212) (Coxiella burnetii (strain Q212)) protein is Glycerol-3-phosphate dehydrogenase [NAD(P)+].